Consider the following 473-residue polypeptide: Gamma-aminobutyric acid receptor subunit beta-3 (473 aa).

Positions 1–25 (MWGFAGGRLFGIFSAPVLVAVVCCA) are cleaved as a signal peptide. The Extracellular portion of the chain corresponds to 26–246 (QSVNDPGNMS…FRLKRNIGYF (221 aa)). N-linked (GlcNAc...) asparagine glycosylation is found at N33 and N105. Residue Y122 participates in histamine binding. Residues C161 and C175 are joined by a disulfide bond. Residue N174 is glycosylated (N-linked (GlcNAc...) asparagine). 4-aminobutanoate contacts are provided by E180, Y182, and T227. Histamine is bound by residues 181–182 (SY) and T227. A helical transmembrane segment spans residues 247–267 (ILQTYMPSILITILSWVSFWI). At 268 to 271 (NYDA) the chain is on the cytoplasmic side. A helical membrane pass occupies residues 272-292 (SAARVALGITTVLTMTTINTH). Residues 293–304 (LRETLPKIPYVK) are Extracellular-facing. The helical transmembrane segment at 305 to 328 (AIDMYLMGCFVFVFLALLEYAFVN) threads the bilayer. At 329-447 (YIFFGRGPQR…KIPDLTDVNA (119 aa)) the chain is on the cytoplasmic side. A helical transmembrane segment spans residues 448-470 (IDRWSRIVFPFTFSLFNLVYWLY). The Extracellular segment spans residues 471–473 (YVN).

The protein belongs to the ligand-gated ion channel (TC 1.A.9) family. Gamma-aminobutyric acid receptor (TC 1.A.9.5) subfamily. GABRB3 sub-subfamily. As to quaternary structure, heteropentamer, formed by a combination of alpha (GABRA1-6), beta (GABRB1-3), gamma (GABRG1-3), delta (GABRD), epsilon (GABRE), rho (GABRR1-3), pi (GABRP) and theta (GABRQ) chains, each subunit exhibiting distinct physiological and pharmacological properties. Can form functional homopentamers (in vitro). Interacts with UBQLN1. May interact with KIF21B. Identified in a complex of 720 kDa composed of LHFPL4, NLGN2, GABRA1, GABRB2, GABRG2 and GABRB3. Interacts with LHFPL4. Interacts with GIT1; this interaction is required for synaptic GABRB3 surface stability and inhibitory synapse strength.

The protein localises to the postsynaptic cell membrane. It is found in the cell membrane. The protein resides in the cytoplasmic vesicle membrane. It catalyses the reaction chloride(in) = chloride(out). With respect to regulation, potentiated by histamine. Its function is as follows. Beta subunit of the heteropentameric ligand-gated chloride channel gated by gamma-aminobutyric acid (GABA), a major inhibitory neurotransmitter in the brain. GABA-gated chloride channels, also named GABA(A) receptors (GABAAR), consist of five subunits arranged around a central pore and contain GABA active binding site(s) located at the alpha and beta subunit interface(s). GABAARs containing beta-3/GABRB3 subunit are found at both synaptic and extrasynaptic sites. When activated by GABA, GABAARs selectively allow the flow of chloride anions across the cell membrane down their electrochemical gradient. Chloride influx into the postsynaptic neuron following GABAAR opening decreases the neuron ability to generate a new action potential, thereby reducing nerve transmission. GABAARs containing alpha-1 and beta-3 subunits exhibit synaptogenic activity; the gamma-2 subunit being necessary but not sufficient to induce rapid synaptic contacts formation. Extrasynaptic beta-3 receptors contribute to the tonic GABAergic inhibition. GABAARs containing alpha-1, beta-3 and epsilon subunits may permit spontaneous chloride channel activity while preserving the structural information required for GABA-gated openings. Beta-containing GABAARs can simultaneously bind GABA and histamine where histamine binds at the interface of two neighboring beta subunits, which may be involved in the regulation of sleep and wakefulness. Plays an important role in somatosensation and in the production of antinociception. The polypeptide is Gamma-aminobutyric acid receptor subunit beta-3 (Mus musculus (Mouse)).